Reading from the N-terminus, the 256-residue chain is Triosephosphate isomerase (256 aa).

9–11 (NWK) contributes to the substrate binding site. H97 functions as the Electrophile in the catalytic mechanism. The Proton acceptor role is filled by E169. Substrate is bound by residues G175, S214, and 235–236 (GG).

This sequence belongs to the triosephosphate isomerase family. Homodimer.

It localises to the cytoplasm. The enzyme catalyses D-glyceraldehyde 3-phosphate = dihydroxyacetone phosphate. The protein operates within carbohydrate biosynthesis; gluconeogenesis. It participates in carbohydrate degradation; glycolysis; D-glyceraldehyde 3-phosphate from glycerone phosphate: step 1/1. Its function is as follows. Involved in the gluconeogenesis. Catalyzes stereospecifically the conversion of dihydroxyacetone phosphate (DHAP) to D-glyceraldehyde-3-phosphate (G3P). In Aliivibrio salmonicida (strain LFI1238) (Vibrio salmonicida (strain LFI1238)), this protein is Triosephosphate isomerase.